The following is a 570-amino-acid chain: Proline--tRNA ligase (570 aa).

The protein belongs to the class-II aminoacyl-tRNA synthetase family. ProS type 1 subfamily. Homodimer.

The protein resides in the cytoplasm. The enzyme catalyses tRNA(Pro) + L-proline + ATP = L-prolyl-tRNA(Pro) + AMP + diphosphate. Its function is as follows. Catalyzes the attachment of proline to tRNA(Pro) in a two-step reaction: proline is first activated by ATP to form Pro-AMP and then transferred to the acceptor end of tRNA(Pro). As ProRS can inadvertently accommodate and process non-cognate amino acids such as alanine and cysteine, to avoid such errors it has two additional distinct editing activities against alanine. One activity is designated as 'pretransfer' editing and involves the tRNA(Pro)-independent hydrolysis of activated Ala-AMP. The other activity is designated 'posttransfer' editing and involves deacylation of mischarged Ala-tRNA(Pro). The misacylated Cys-tRNA(Pro) is not edited by ProRS. The chain is Proline--tRNA ligase from Wolinella succinogenes (strain ATCC 29543 / DSM 1740 / CCUG 13145 / JCM 31913 / LMG 7466 / NCTC 11488 / FDC 602W) (Vibrio succinogenes).